Reading from the N-terminus, the 93-residue chain is Small ribosomal subunit protein bS6 (93 aa).

This sequence belongs to the bacterial ribosomal protein bS6 family.

In terms of biological role, binds together with bS18 to 16S ribosomal RNA. This Treponema denticola (strain ATCC 35405 / DSM 14222 / CIP 103919 / JCM 8153 / KCTC 15104) protein is Small ribosomal subunit protein bS6.